The sequence spans 1451 residues: Dicer-like protein 2 (1451 aa).

The interval 34–53 is disordered; the sequence is YDGHLSEEDSPGGKPRPKEQ. The Helicase ATP-binding domain occupies 70–247; it reads MLEASLKENI…LKRLESTLDA (178 aa). 83-90 provides a ligand contact to ATP; sequence MDTGSGKT. A DEAH box motif is present at residues 190–193; the sequence is DEAH. Residues 412-582 form the Helicase C-terminal domain; it reads KVQRIIEVLL…RLEAIENSEA (171 aa). Residues 603–704 form the Dicer dsRNA-binding fold domain; it reads AKSHLQHFVS…LPLRDRLELE (102 aa). 2 consecutive RNase III domains span residues 968-1111 and 1153-1351; these read AAEL…VDGG and LQLL…VDAG. E1192 serves as a coordination point for Mg(2+). Residues 1253–1272 are disordered; that stretch reads EGDSDSKSSGDSTSDKASPR. Mg(2+)-binding residues include D1337 and E1340.

Belongs to the helicase family. Dicer subfamily. Mg(2+) is required as a cofactor. Mn(2+) serves as cofactor.

Functionally, dicer-like endonuclease involved in cleaving double-stranded RNA in the RNA interference (RNAi) pathway. Produces 21 to 25 bp dsRNAs (siRNAs) which target the selective destruction of homologous RNAs leading to sequence-specific suppression of gene expression, called post-transcriptional gene silencing (PTGS). Part of a broad host defense, DCL-2 is involved in antiviral defense against mycoviruses like the hypovirus CHV1-EP713 and the reovirus MyRV1-Cp9B21. This Cryphonectria parasitica (Chestnut blight fungus) protein is Dicer-like protein 2 (DCL-2).